We begin with the raw amino-acid sequence, 710 residues long: Polyribonucleotide nucleotidyltransferase (710 aa).

Mg(2+) is bound by residues Asp-489 and Asp-495. The 60-residue stretch at 556–615 folds into the KH domain; sequence PKIDTIKIDVDKIKVVIGKGGETIDKIIAETGVKIDIDDEGNVSIYSSDQAAIDRTKEII. The region spanning 625–693 is the S1 motif domain; sequence GEVYHAKVVR…EKGRVDASMK (69 aa). Residues 691-710 form a disordered region; sequence SMKALIPRPPKPEKKEEKHD. Basic and acidic residues predominate over residues 700 to 710; that stretch reads PKPEKKEEKHD.

It belongs to the polyribonucleotide nucleotidyltransferase family. The cofactor is Mg(2+).

Its subcellular location is the cytoplasm. It carries out the reaction RNA(n+1) + phosphate = RNA(n) + a ribonucleoside 5'-diphosphate. Involved in mRNA degradation. Catalyzes the phosphorolysis of single-stranded polyribonucleotides processively in the 3'- to 5'-direction. This Streptococcus pyogenes serotype M49 (strain NZ131) protein is Polyribonucleotide nucleotidyltransferase.